Consider the following 249-residue polypeptide: Ubiquinone biosynthesis O-methyltransferase (249 aa).

The S-adenosyl-L-methionine site is built by Arg-44, Gly-75, Asp-96, and Met-138.

This sequence belongs to the methyltransferase superfamily. UbiG/COQ3 family.

The enzyme catalyses a 3-demethylubiquinol + S-adenosyl-L-methionine = a ubiquinol + S-adenosyl-L-homocysteine + H(+). It carries out the reaction a 3-(all-trans-polyprenyl)benzene-1,2-diol + S-adenosyl-L-methionine = a 2-methoxy-6-(all-trans-polyprenyl)phenol + S-adenosyl-L-homocysteine + H(+). The protein operates within cofactor biosynthesis; ubiquinone biosynthesis. Its function is as follows. O-methyltransferase that catalyzes the 2 O-methylation steps in the ubiquinone biosynthetic pathway. The protein is Ubiquinone biosynthesis O-methyltransferase of Paramagnetospirillum magneticum (strain ATCC 700264 / AMB-1) (Magnetospirillum magneticum).